A 489-amino-acid polypeptide reads, in one-letter code: Ketol-acid reductoisomerase (NADP(+)) (489 aa).

A KARI N-terminal Rossmann domain is found at 16–207 (IKKCRFMEKK…GGHRAGVLES (192 aa)). Residues 44–47 (CGSQ), Arg-67, Ser-77, and 107–109 (DKQ) contribute to the NADP(+) site. The active site involves His-131. Gly-157 contacts NADP(+). KARI C-terminal knotted domains follow at residues 208–343 (SFVA…QSPD) and 344–483 (YDKK…MKNM). Mg(2+) contacts are provided by Asp-216, Glu-220, Glu-388, and Glu-392. Residue Ser-413 coordinates substrate.

It belongs to the ketol-acid reductoisomerase family. Mg(2+) serves as cofactor.

The catalysed reaction is (2R)-2,3-dihydroxy-3-methylbutanoate + NADP(+) = (2S)-2-acetolactate + NADPH + H(+). It catalyses the reaction (2R,3R)-2,3-dihydroxy-3-methylpentanoate + NADP(+) = (S)-2-ethyl-2-hydroxy-3-oxobutanoate + NADPH + H(+). The protein operates within amino-acid biosynthesis; L-isoleucine biosynthesis; L-isoleucine from 2-oxobutanoate: step 2/4. It functions in the pathway amino-acid biosynthesis; L-valine biosynthesis; L-valine from pyruvate: step 2/4. Involved in the biosynthesis of branched-chain amino acids (BCAA). Catalyzes an alkyl-migration followed by a ketol-acid reduction of (S)-2-acetolactate (S2AL) to yield (R)-2,3-dihydroxy-isovalerate. In the isomerase reaction, S2AL is rearranged via a Mg-dependent methyl migration to produce 3-hydroxy-3-methyl-2-ketobutyrate (HMKB). In the reductase reaction, this 2-ketoacid undergoes a metal-dependent reduction by NADPH to yield (R)-2,3-dihydroxy-isovalerate. The sequence is that of Ketol-acid reductoisomerase (NADP(+)) from Buchnera aphidicola subsp. Diuraphis noxia.